The chain runs to 2275 residues: Multifunctional protein pyrABCN (2275 aa).

The interval M1–F440 is GATase (Glutamine amidotransferase). Residues S102, G313, and G315 each coordinate L-glutamine. Residues R265–S453 enclose the Glutamine amidotransferase type-1 domain. C342 serves as the catalytic Nucleophile; for GATase activity. L-glutamine is bound by residues L343, Q346, N384, G386, and Y387. Catalysis depends on for GATase activity residues H426 and E428. Residues D441–K482 are linker. The CPSase (Carbamoyl-phosphate synthase) stretch occupies residues V483–I1522. The ATP site is built by R600, R640, G646, G647, R677, M679, E684, G710, I711, H712, Q753, and E767. 2 ATP-grasp domains span residues A604 to L796 and S1139 to I1330. Residues Q753, E767, and N769 each contribute to the Mg(2+) site. Q753, E767, and N769 together coordinate Mn(2+). ATP is bound by residues R1175, K1214, I1216, E1221, G1246, V1247, H1248, S1249, Q1289, and E1301. Mg(2+)-binding residues include Q1289, E1301, and N1303. Residues Q1289, E1301, and N1303 each coordinate Mn(2+). Residues F1396 to S1575 enclose the MGS-like domain. The segment at E1523–N1532 is linker. Positions V1533–S1862 are defective DHOase domain. Residues E1863–A1882 are disordered. A linker region spans residues E1863–K1953. The segment at Q1954–M2258 is ATCase (Aspartate transcarbamylase). The carbamoyl phosphate site is built by R2006 and T2007. K2034 lines the L-aspartate pocket. Carbamoyl phosphate-binding residues include R2055, H2083, and Q2086. Residues R2116 and R2178 each contribute to the L-aspartate site. Carbamoyl phosphate is bound by residues L2217 and P2218.

This sequence in the central section; belongs to the metallo-dependent hydrolases superfamily. DHOase family. CAD subfamily. In the N-terminal section; belongs to the CarA family. The protein in the 2nd section; belongs to the CarB family. It in the 3rd section; belongs to the metallo-dependent hydrolases superfamily. DHOase family. CAD subfamily. This sequence in the C-terminal section; belongs to the aspartate/ornithine carbamoyltransferase superfamily. ATCase family. The cofactor is Mg(2+). Requires Mn(2+) as cofactor.

It catalyses the reaction hydrogencarbonate + L-glutamine + 2 ATP + H2O = carbamoyl phosphate + L-glutamate + 2 ADP + phosphate + 2 H(+). It carries out the reaction L-glutamine + H2O = L-glutamate + NH4(+). The enzyme catalyses hydrogencarbonate + NH4(+) + 2 ATP = carbamoyl phosphate + 2 ADP + phosphate + 2 H(+). The catalysed reaction is carbamoyl phosphate + L-aspartate = N-carbamoyl-L-aspartate + phosphate + H(+). The protein operates within pyrimidine metabolism; UMP biosynthesis via de novo pathway; (S)-dihydroorotate from bicarbonate: step 1/3. It participates in pyrimidine metabolism; UMP biosynthesis via de novo pathway; (S)-dihydroorotate from bicarbonate: step 2/3. In terms of biological role, multifunctional protein that encodes the first 2 enzymatic activities of the de novo pyrimidine pathway: carbamoylphosphate synthetase (CPSase; EC 6.3.5.5) and aspartate transcarbamylase (ATCase; EC 2.1.3.2). The CPSase-function is accomplished in 2 steps, by a glutamine-dependent amidotransferase activity (GATase) that binds and cleaves glutamine to produce ammonia, followed by an ammonium-dependent carbamoyl phosphate synthetase, which reacts with the ammonia, hydrogencarbonate and ATP to form carbamoyl phosphate. The endogenously produced carbamoyl phosphate is sequestered and channeled to the ATCase active site. ATCase then catalyzes the formation of carbamoyl-L-aspartate from L-aspartate and carbamoyl phosphate. The protein is Multifunctional protein pyrABCN of Emericella nidulans (strain FGSC A4 / ATCC 38163 / CBS 112.46 / NRRL 194 / M139) (Aspergillus nidulans).